A 519-amino-acid chain; its full sequence is Cytochrome P450 monooxygenase FPY7 (519 aa).

Residues 12 to 34 (SLSLRWKIIVTLLAIYTLRIIGT) traverse the membrane as a helical segment. Residue Cys-465 coordinates heme.

The protein belongs to the cytochrome P450 family. Heme serves as cofactor.

The protein resides in the membrane. It functions in the pathway secondary metabolite biosynthesis. In terms of biological role, cytochrome P450 monooxygenase; part of the gene cluster that mediates the biosynthesis of the gamma-pyrones fusapyrone (FPY) and deoxyfusapyrone (dFPY). FPY is an undecaketide and thus likely synthesized by the polyketide synthase FPY1 from acetyl-CoA functioning as starter unit and the addition of 10 malonyl-CoA extender units by successive Claisen-condensations. Next to this, FPY shares some rare features: C-glycosylated 4-deoxyglucose at C-3, a gem-dimethyl group at C-13, and an alpha-beta to beta-gamma double bond shift at C-20. During FPY biosynthesis mono-C-methyl groups are transferred to the tetra-, penta-, hexa- and heptaketide, while two C-methyl groups are transferred to the nonaketide, suggesting that the CMet domain is programmed to selectively catalyze two successive C-alpha-methylation reactions of the nonaketide, while other alpha-carbons are non- or mono-methylated only. While the origin of the 4'-deoxyglucose moiety remains opaque, its transfer to C-3 is most likely mediated by the C-glycosyltransferase FPY2. Next to this, the hydroxyl group present at C-33 and discriminating between FPY and dFPY, is likely to be installed by the cytochrome P450 monooxygenase FPY7. No putative function can be predicted for the remaining genes FPY3-FPY6. This is Cytochrome P450 monooxygenase FPY7 from Fusarium mangiferae (Mango malformation disease fungus).